The primary structure comprises 380 residues: 3-dehydroquinate synthase (380 aa).

Residues 100–104 (GAASD), 124–125 (TT), Lys-137, and Lys-146 contribute to the NAD(+) site. 3 residues coordinate Zn(2+): Glu-179, His-251, and His-267. A disordered region spans residues 320–343 (YMQRDKKNMQSNDTDSDKDSREMP).

Belongs to the sugar phosphate cyclases superfamily. Dehydroquinate synthase family. Requires NAD(+) as cofactor. Co(2+) is required as a cofactor. The cofactor is Zn(2+).

It is found in the cytoplasm. The enzyme catalyses 7-phospho-2-dehydro-3-deoxy-D-arabino-heptonate = 3-dehydroquinate + phosphate. Its pathway is metabolic intermediate biosynthesis; chorismate biosynthesis; chorismate from D-erythrose 4-phosphate and phosphoenolpyruvate: step 2/7. Catalyzes the conversion of 3-deoxy-D-arabino-heptulosonate 7-phosphate (DAHP) to dehydroquinate (DHQ). This is 3-dehydroquinate synthase from Tropheryma whipplei (strain Twist) (Whipple's bacillus).